Consider the following 438-residue polypeptide: EF-hand calcium-binding domain-containing protein 3 (438 aa).

EF-hand domains are found at residues Ser47–Asn82 and Leu83–Phe118. Positions 96, 98, 100, 102, and 107 each coordinate Ca(2+). The residue at position 279 (Tyr279) is a Phosphotyrosine. A compositionally biased stretch (low complexity) spans Ser405–Ser415. Residues Ser405–Gln438 form a disordered region. Positions Arg426–Gln438 are enriched in basic residues.

This chain is EF-hand calcium-binding domain-containing protein 3 (EFCAB3), found in Homo sapiens (Human).